The following is a 500-amino-acid chain: Glycerol kinase (500 aa).

Residue Thr-16 participates in ADP binding. Residues Thr-16 and Thr-17 each contribute to the ATP site. Thr-16 is a sn-glycerol 3-phosphate binding site. Arg-20 is a binding site for ADP. 4 residues coordinate sn-glycerol 3-phosphate: Arg-86, Glu-87, Tyr-138, and Asp-243. Glycerol contacts are provided by Arg-86, Glu-87, Tyr-138, Asp-243, and Gln-244. Positions 265 and 313 each coordinate ADP. Thr-265, Gly-313, Gln-317, and Gly-414 together coordinate ATP. ADP is bound by residues Gly-414 and Asn-418.

It belongs to the FGGY kinase family.

The enzyme catalyses glycerol + ATP = sn-glycerol 3-phosphate + ADP + H(+). Its pathway is polyol metabolism; glycerol degradation via glycerol kinase pathway; sn-glycerol 3-phosphate from glycerol: step 1/1. Inhibited by fructose 1,6-bisphosphate (FBP). Its function is as follows. Key enzyme in the regulation of glycerol uptake and metabolism. Catalyzes the phosphorylation of glycerol to yield sn-glycerol 3-phosphate. The chain is Glycerol kinase from Nostoc sp. (strain PCC 7120 / SAG 25.82 / UTEX 2576).